The primary structure comprises 396 residues: NAD(P)H oxidoreductase RTN4IP1, mitochondrial (396 aa).

The transit peptide at 1–40 directs the protein to the mitochondrion; it reads MEFLKTCVLRRNACTAVCFWRSKVVQKPSVRRISTTSPRS. One can recognise an Enoyl reductase (ER) domain in the interval 52–393; it reads GKNEVLRFTQ…RGHARGKTVI (342 aa). Residues serine 214, glycine 216, valine 217, serine 237, tyrosine 255, asparagine 276, leucine 300, alanine 341, phenylalanine 343, histidine 386, alanine 387, and arginine 388 each contribute to the NADPH site.

It belongs to the zinc-containing alcohol dehydrogenase family. Quinone oxidoreductase subfamily. As to quaternary structure, interacts with RTN4, UQCRC1 and UQCRC2. In terms of tissue distribution, widely expressed in mitochondria-enriched tissues. Found in heart, muscle, kidney, liver, brain and placenta.

Its subcellular location is the mitochondrion matrix. The protein resides in the mitochondrion outer membrane. It carries out the reaction a 3-demethylubiquinone + NADH + 2 H(+) = a 3-demethylubiquinol + NAD(+). It catalyses the reaction a 3-demethylubiquinone + NADPH + 2 H(+) = a 3-demethylubiquinol + NADP(+). The enzyme catalyses 3-demethylubiquinone-10 + NADH + 2 H(+) = 3-demethylubiquinol-10 + NAD(+). The catalysed reaction is 3-demethylubiquinone-10 + NADPH + 2 H(+) = 3-demethylubiquinol-10 + NADP(+). It functions in the pathway cofactor biosynthesis; ubiquinone biosynthesis. NAD(P)H oxidoreductase involved in the ubiquinone biosynthetic pathway. Required for the O-methyltransferase activity of COQ3. Able to catalyze the oxidoreduction of 3-demethylubiquinone into 3-demethylubiquinol in vitro. However, it is unclear if 3-demethylubiquinone constitutes a substrate in vivo. May also play a role in the regulation of retinal ganglion cell (RGC) neurite outgrowth, and hence in the development of the inner retina and optic nerve. Appears to be a potent inhibitor of regeneration following spinal cord injury. This Homo sapiens (Human) protein is NAD(P)H oxidoreductase RTN4IP1, mitochondrial.